The chain runs to 505 residues: MSAADTAEDLPEQFRIRRDKRARLLAQGRDPYPVAVPRTHTLAEVRAAHPDLPIDTATEDIVGVAGRVIFARNSGKLCFATLQDGDGTQLQVMISLDKVGQAALDAWKADVDLGDIVYVHGAVISSRRGELSVLADCWRIAAKSLRPLPVAHKEMSEESRVRQRYVDLIVRPEARAVARLRIAVVRAIRTALQRRGFLEVETPVLQTLAGGAAARPFATHSNALDIDLYLRIAPELFLKRCIVGGFDKVFELNRVFRNEGADSTHSPEFSMLETYQTYGTYDDSAVVTRELIQEVADEAIGTRQLPLPDGSVYDIDGEWATIQMYPSLSVALGEEITPQTTVDRLRGIADSLGLEKDPAIHDNRGFGHGKLIEELWERTVGKSLSAPTFVKDFPVQTTPLTRQHRSIPGVTEKWDLYLRGIELATGYSELSDPVVQRERFADQARAAAAGDDEAMVLDEDFLAALEYGMPPCTGTGMGIDRLLMSLTGLSIRETVLFPIVRPHSN.

2 residues coordinate Mg(2+): aspartate 415 and glutamate 422.

The protein belongs to the class-II aminoacyl-tRNA synthetase family. In terms of assembly, homodimer. Mg(2+) is required as a cofactor.

The protein resides in the cytoplasm. The catalysed reaction is tRNA(Lys) + L-lysine + ATP = L-lysyl-tRNA(Lys) + AMP + diphosphate. The chain is Lysine--tRNA ligase 1 (lysS1) from Mycobacterium bovis (strain ATCC BAA-935 / AF2122/97).